The primary structure comprises 585 residues: Arginine--tRNA ligase (585 aa).

The 'HIGH' region signature appears at 131-141 (ANPTGPMHVGH).

The protein belongs to the class-I aminoacyl-tRNA synthetase family. In terms of assembly, monomer.

The protein resides in the cytoplasm. The enzyme catalyses tRNA(Arg) + L-arginine + ATP = L-arginyl-tRNA(Arg) + AMP + diphosphate. In Rhizobium leguminosarum bv. trifolii (strain WSM2304), this protein is Arginine--tRNA ligase.